The sequence spans 473 residues: Argininosuccinate lyase (473 aa).

Belongs to the lyase 1 family. Argininosuccinate lyase subfamily.

It is found in the cytoplasm. The catalysed reaction is 2-(N(omega)-L-arginino)succinate = fumarate + L-arginine. It participates in amino-acid biosynthesis; L-arginine biosynthesis; L-arginine from L-ornithine and carbamoyl phosphate: step 3/3. This Chelativorans sp. (strain BNC1) protein is Argininosuccinate lyase.